A 514-amino-acid chain; its full sequence is Histidine ammonia-lyase (514 aa).

A cross-link (5-imidazolinone (Cys-Gly)) is located at residues 143-145 (CSG). Ser-144 carries the post-translational modification 2,3-didehydroalanine (Ser).

This sequence belongs to the PAL/histidase family. Contains an active site 4-methylidene-imidazol-5-one (MIO), which is formed autocatalytically by cyclization and dehydration of residues Cys-Ser-Gly.

The protein localises to the cytoplasm. It carries out the reaction L-histidine = trans-urocanate + NH4(+). It participates in amino-acid degradation; L-histidine degradation into L-glutamate; N-formimidoyl-L-glutamate from L-histidine: step 1/3. The chain is Histidine ammonia-lyase (hutH) from Streptomyces griseus.